The primary structure comprises 205 residues: Recombination protein RecR (205 aa).

The C4-type zinc finger occupies 58-73; it reads CKKCHTISDHELCAIC. Residues 81-177 enclose the Toprim domain; it reads RVVCIVEDIR…KISTIARGIP (97 aa).

Belongs to the RecR family.

May play a role in DNA repair. It seems to be involved in an RecBC-independent recombinational process of DNA repair. It may act with RecF and RecO. In Cytophaga hutchinsonii (strain ATCC 33406 / DSM 1761 / CIP 103989 / NBRC 15051 / NCIMB 9469 / D465), this protein is Recombination protein RecR.